The sequence spans 159 residues: MQKRAIYPGTFDPITNGHIDIVTRATQMFDHVILAIAASPSKKPMFTLEERVALTQQATAHLGNVEVVGFSDLMANFARNQHATVLIRGLRAVADFEYEMQLAHMNRHLMPELESVFLMPSKEWSFISSSLVKEVARHQGDVTHFLPENVHQALVAKLA.

Substrate is bound at residue threonine 10. ATP is bound by residues 10–11 and histidine 18; that span reads TF. Substrate-binding residues include lysine 42, methionine 74, and arginine 88. ATP is bound by residues 89 to 91, glutamate 99, and 124 to 130; these read GLR and WSFISSS.

It belongs to the bacterial CoaD family. In terms of assembly, homohexamer. Requires Mg(2+) as cofactor.

Its subcellular location is the cytoplasm. It catalyses the reaction (R)-4'-phosphopantetheine + ATP + H(+) = 3'-dephospho-CoA + diphosphate. Its pathway is cofactor biosynthesis; coenzyme A biosynthesis; CoA from (R)-pantothenate: step 4/5. Functionally, reversibly transfers an adenylyl group from ATP to 4'-phosphopantetheine, yielding dephospho-CoA (dPCoA) and pyrophosphate. This Shigella sonnei (strain Ss046) protein is Phosphopantetheine adenylyltransferase.